The chain runs to 608 residues: Elongation factor 4 (608 aa).

The tr-type G domain maps to 11-193 (DRIRNFSIIA…QIVQKIPAPS (183 aa)). GTP-binding positions include 23-28 (DHGKST) and 140-143 (NKID).

The protein belongs to the TRAFAC class translation factor GTPase superfamily. Classic translation factor GTPase family. LepA subfamily.

The protein localises to the cell membrane. The enzyme catalyses GTP + H2O = GDP + phosphate + H(+). Its function is as follows. Required for accurate and efficient protein synthesis under certain stress conditions. May act as a fidelity factor of the translation reaction, by catalyzing a one-codon backward translocation of tRNAs on improperly translocated ribosomes. Back-translocation proceeds from a post-translocation (POST) complex to a pre-translocation (PRE) complex, thus giving elongation factor G a second chance to translocate the tRNAs correctly. Binds to ribosomes in a GTP-dependent manner. The sequence is that of Elongation factor 4 from Anoxybacillus flavithermus (strain DSM 21510 / WK1).